We begin with the raw amino-acid sequence, 154 residues long: Protein X (154 aa).

A mitochondrial targeting sequence region spans residues 68–117 (PCALRFTFARRMETTVNAHQVLPKVLHKRTLGLSAMSTTDLEAYFKDCVF).

The protein belongs to the orthohepadnavirus protein X family. In terms of assembly, may form homodimer. May interact with host CEBPA, CFLAR, CREB1, DDB1, E4F1, HBXIP, HSPD1/HSP60, NFKBIA, POLR2E and SMAD4. Interacts with host SMC5-SMC6 complex and induces its degradation. Interacts with host TRPC4AP; leading to prevent ubiquitination of TRPC4AP. Interacts with host PLSCR1; this interaction promotes ubiquitination and degradation of HBx and impairs HBx-mediated cell proliferation. A fraction may be phosphorylated in insect cells and HepG2 cells, a human hepatoblastoma cell line. Phosphorylated in vitro by host protein kinase C or mitogen-activated protein kinase. N-acetylated in insect cells.

The protein localises to the host cytoplasm. It is found in the host nucleus. Its subcellular location is the host mitochondrion. Functionally, multifunctional protein that plays a role in silencing host antiviral defenses and promoting viral transcription. Does not seem to be essential for HBV infection. May be directly involved in development of cirrhosis and liver cancer (hepatocellular carcinoma). Most of cytosolic activities involve modulation of cytosolic calcium. The effect on apoptosis is controversial depending on the cell types in which the studies have been conducted. May induce apoptosis by localizing in mitochondria and causing loss of mitochondrial membrane potential. May also modulate apoptosis by binding host CFLAR, a key regulator of the death-inducing signaling complex (DISC). Promotes viral transcription by using the host E3 ubiquitin ligase DDB1 to target the SMC5-SMC6 complex to proteasomal degradation. This host complex would otherwise bind to viral episomal DNA, and prevents its transcription. Moderately stimulates transcription of many different viral and cellular transcription elements. Promoters and enhancers stimulated by HBx contain DNA binding sites for NF-kappa-B, AP-1, AP-2, c-EBP, ATF/CREB, or the calcium-activated factor NF-AT. This is Protein X from Hepatitis B virus genotype C subtype ayw (isolate China/Tibet127/2002) (HBV-C).